Here is a 386-residue protein sequence, read N- to C-terminus: Succinyl-diaminopimelate desuccinylase (386 aa).

Histidine 73 contributes to the Zn(2+) binding site. Residue aspartate 75 is part of the active site. A Zn(2+)-binding site is contributed by aspartate 106. Glutamate 140 acts as the Proton acceptor in catalysis. Glutamate 141, glutamate 169, and histidine 355 together coordinate Zn(2+).

Belongs to the peptidase M20A family. DapE subfamily. As to quaternary structure, homodimer. It depends on Zn(2+) as a cofactor. Co(2+) is required as a cofactor.

The enzyme catalyses N-succinyl-(2S,6S)-2,6-diaminopimelate + H2O = (2S,6S)-2,6-diaminopimelate + succinate. The protein operates within amino-acid biosynthesis; L-lysine biosynthesis via DAP pathway; LL-2,6-diaminopimelate from (S)-tetrahydrodipicolinate (succinylase route): step 3/3. Functionally, catalyzes the hydrolysis of N-succinyl-L,L-diaminopimelic acid (SDAP), forming succinate and LL-2,6-diaminopimelate (DAP), an intermediate involved in the bacterial biosynthesis of lysine and meso-diaminopimelic acid, an essential component of bacterial cell walls. The protein is Succinyl-diaminopimelate desuccinylase of Delftia acidovorans (strain DSM 14801 / SPH-1).